The chain runs to 360 residues: Xanthohumol 4-O-methyltransferase (360 aa).

Residue aspartate 227 coordinates S-adenosyl-L-methionine. Histidine 266 serves as the catalytic Proton acceptor.

The protein belongs to the class I-like SAM-binding methyltransferase superfamily. Cation-independent O-methyltransferase family. Homodimer. As to expression, highly expressed in lupulin glands. Detected in cones, male flowers and roots.

Its subcellular location is the cytoplasm. It catalyses the reaction xanthohumol + S-adenosyl-L-methionine = 4-O-methylxanthohumol + S-adenosyl-L-homocysteine + H(+). It carries out the reaction desmethylxanthohumol + S-adenosyl-L-methionine = xanthohumol + S-adenosyl-L-homocysteine + H(+). The catalysed reaction is isoliquiritigenin + S-adenosyl-L-methionine = 2'-O-methylisoliquiritigenin + S-adenosyl-L-homocysteine + H(+). The enzyme catalyses trans-resveratrol + S-adenosyl-L-methionine = 3-methoxy-4',5-dihydroxy-trans-stilbene + S-adenosyl-L-homocysteine + H(+). Its pathway is secondary metabolite biosynthesis. With respect to regulation, inhibited by S-adenosyl homocysteine. In terms of biological role, involved in the biosynthesis of prenylated phenolics natural products which contribute to the bitter taste of beer and display broad biological activities. O-methyltransferase with a low substrate selectivity. Methylates chalconaringenin, desmethylxanthohumol, xanthohumol, isoliquiritigenin, butein, 2',4-dihydroxychalcone, resveratrol, genistein and guaiacol. Catalyzes the biosynthesis of 2',4'-dihydroxy-4,6'-dimethoxy-3'-prenylchalcone (4-O-methylxanthohumol). This chain is Xanthohumol 4-O-methyltransferase, found in Humulus lupulus (European hop).